A 333-amino-acid chain; its full sequence is Protoheme IX farnesyltransferase (333 aa).

7 helical membrane-spanning segments follow: residues 63 to 83 (LACT…LNCI), 109 to 129 (AAFI…VSGV), 132 to 152 (LAAG…TAIL), 160 to 180 (IVIG…AASG), 188 to 208 (WLFA…ALLL), 245 to 265 (GFGV…LIPF), and 292 to 312 (WSIF…LPMA).

The protein belongs to the UbiA prenyltransferase family. Protoheme IX farnesyltransferase subfamily.

It is found in the cell inner membrane. The enzyme catalyses heme b + (2E,6E)-farnesyl diphosphate + H2O = Fe(II)-heme o + diphosphate. It functions in the pathway porphyrin-containing compound metabolism; heme O biosynthesis; heme O from protoheme: step 1/1. Converts heme B (protoheme IX) to heme O by substitution of the vinyl group on carbon 2 of heme B porphyrin ring with a hydroxyethyl farnesyl side group. The sequence is that of Protoheme IX farnesyltransferase from Prochlorococcus marinus (strain MIT 9303).